The following is a 260-amino-acid chain: HTH-type transcriptional repressor NanR (260 aa).

The tract at residues 1–21 (MSAFDHSSDDTQETIGNSLRR) is disordered. Residues 27 to 95 (KKLSEMVEEE…NGERARVSRP (69 aa)) form the HTH gntR-type domain. Residues 55–74 (ERELMAFFNVGRPSVREALA) constitute a DNA-binding region (H-T-H motif).

This sequence belongs to the NanR family.

In terms of biological role, transcriptional repressor that controls expression of the genes required for the catabolism of sialic acids. This chain is HTH-type transcriptional repressor NanR, found in Klebsiella aerogenes (strain ATCC 13048 / DSM 30053 / CCUG 1429 / JCM 1235 / KCTC 2190 / NBRC 13534 / NCIMB 10102 / NCTC 10006 / CDC 819-56) (Enterobacter aerogenes).